Reading from the N-terminus, the 335-residue chain is MMFPGLLAPPAGYPSLLRPTPTLTLPQSLQSAFSGHSSFLVEDLIRISRPPTYLPRSIPTASLSPPRQEAPTALADSGTSDLGSPGSGSRRGSSPQTALSPASEPTFLKFGVNAILSSAPRRETSPALLQSPPPKTFAFPYFEGSFQPFIRSSYFPASSSVVPIPGTFSWPLAARGKPRRGMLRRAVFSDVQRKALEKTFQKQKYISKPDRKKLASKLGLKDSQVKIWFQNRRMKWRNSKERELLSSGGCREQTLPTKLNPHPDLSDVGQKGPGDEEEDSPGASLAYHAPPDPRHLLEGPLPASPAHSSSPGKPSDFSDSDEDEEGEEDEEITVS.

Disordered stretches follow at residues 56–102 (RSIP…LSPA) and 240–335 (KERE…ITVS). Residues 83-95 (GSPGSGSRRGSSP) are compositionally biased toward low complexity. The segment at residues 181–240 (GMLRRAVFSDVQRKALEKTFQKQKYISKPDRKKLASKLGLKDSQVKIWFQNRRMKWRNSK) is a DNA-binding region (homeobox). Residues 299-317 (GPLPASPAHSSSPGKPSDF) are compositionally biased toward low complexity. Residues 318 to 335 (SDSDEDEEGEEDEEITVS) are compositionally biased toward acidic residues.

This sequence belongs to the H2.0 homeobox family.

It localises to the nucleus. Functionally, could have a role in patterning the central nervous system during embryogenesis. Has a key role in regulating the distinct phenotypic features that distinguish two major classes of ventral interneurons, V0 and V1 neurons. Regulates the transcription factor profile, neurotransmitter phenotype, intraspinal migratory path and axonal trajectory of V0 neurons, features that differentiate them from an adjacent set of V1 neurons. In Rattus norvegicus (Rat), this protein is Homeobox protein DBX1 (Dbx1).